The sequence spans 72 residues: UPF0270 protein YheU (72 aa).

This sequence belongs to the UPF0270 family.

This Escherichia coli (strain UTI89 / UPEC) protein is UPF0270 protein YheU.